Here is a 244-residue protein sequence, read N- to C-terminus: 1-(5-phosphoribosyl)-5-[(5-phosphoribosylamino)methylideneamino] imidazole-4-carboxamide isomerase (244 aa).

Aspartate 8 acts as the Proton acceptor in catalysis. Residue aspartate 129 is the Proton donor of the active site.

It belongs to the HisA/HisF family.

Its subcellular location is the cytoplasm. The catalysed reaction is 1-(5-phospho-beta-D-ribosyl)-5-[(5-phospho-beta-D-ribosylamino)methylideneamino]imidazole-4-carboxamide = 5-[(5-phospho-1-deoxy-D-ribulos-1-ylimino)methylamino]-1-(5-phospho-beta-D-ribosyl)imidazole-4-carboxamide. It functions in the pathway amino-acid biosynthesis; L-histidine biosynthesis; L-histidine from 5-phospho-alpha-D-ribose 1-diphosphate: step 4/9. The sequence is that of 1-(5-phosphoribosyl)-5-[(5-phosphoribosylamino)methylideneamino] imidazole-4-carboxamide isomerase from Allorhizobium ampelinum (strain ATCC BAA-846 / DSM 112012 / S4) (Agrobacterium vitis (strain S4)).